Consider the following 230-residue polypeptide: NAD(P)H-hydrate epimerase (230 aa).

In terms of domain architecture, YjeF N-terminal spans A11–L218. Residue N61–D65 participates in (6S)-NADPHX binding. K(+) contacts are provided by N62 and D126. Residues G130–P136 and D159 contribute to the (6S)-NADPHX site. S162 contributes to the K(+) binding site.

The protein belongs to the NnrE/AIBP family. Requires K(+) as cofactor.

The catalysed reaction is (6R)-NADHX = (6S)-NADHX. The enzyme catalyses (6R)-NADPHX = (6S)-NADPHX. Catalyzes the epimerization of the S- and R-forms of NAD(P)HX, a damaged form of NAD(P)H that is a result of enzymatic or heat-dependent hydration. This is a prerequisite for the S-specific NAD(P)H-hydrate dehydratase to allow the repair of both epimers of NAD(P)HX. This chain is NAD(P)H-hydrate epimerase, found in Drosophila melanogaster (Fruit fly).